Reading from the N-terminus, the 389-residue chain is Phospho-N-acetylmuramoyl-pentapeptide-transferase (389 aa).

A run of 10 helical transmembrane segments spans residues 25-45 (RAVMATITALGIGLVCGPWVI), 73-93 (TMGGVLILIGIAVATLLWGDL), 97-117 (FIWIVMLVTFGFGVIGWVDDY), 135-155 (FWQSVIGLFAAVYLAFSVSEA), 190-210 (ISYPLGVWGFIVLTYFVIVGA), 222-242 (GLVIMPVVLVGGSLGVFAYVM), 258-278 (GAGELLIFCSAMGGAGLAFLW), 286-306 (VFMGDVGALALGGALGTVAVI), 311-331 (IVLFIMGGIFVAETLSVMLQV), and 366-386 (QVVVRFWIITLMLCLFGLSTL).

The protein belongs to the glycosyltransferase 4 family. MraY subfamily. It depends on Mg(2+) as a cofactor.

The protein localises to the cell inner membrane. It carries out the reaction UDP-N-acetyl-alpha-D-muramoyl-L-alanyl-gamma-D-glutamyl-meso-2,6-diaminopimeloyl-D-alanyl-D-alanine + di-trans,octa-cis-undecaprenyl phosphate = di-trans,octa-cis-undecaprenyl diphospho-N-acetyl-alpha-D-muramoyl-L-alanyl-D-glutamyl-meso-2,6-diaminopimeloyl-D-alanyl-D-alanine + UMP. It participates in cell wall biogenesis; peptidoglycan biosynthesis. Functionally, catalyzes the initial step of the lipid cycle reactions in the biosynthesis of the cell wall peptidoglycan: transfers peptidoglycan precursor phospho-MurNAc-pentapeptide from UDP-MurNAc-pentapeptide onto the lipid carrier undecaprenyl phosphate, yielding undecaprenyl-pyrophosphoryl-MurNAc-pentapeptide, known as lipid I. The chain is Phospho-N-acetylmuramoyl-pentapeptide-transferase from Burkholderia ambifaria (strain ATCC BAA-244 / DSM 16087 / CCUG 44356 / LMG 19182 / AMMD) (Burkholderia cepacia (strain AMMD)).